Here is a 269-residue protein sequence, read N- to C-terminus: tRNA pseudouridine synthase A (269 aa).

D55 acts as the Nucleophile in catalysis. Y111 is a substrate binding site.

Belongs to the tRNA pseudouridine synthase TruA family.

It catalyses the reaction uridine(38/39/40) in tRNA = pseudouridine(38/39/40) in tRNA. Functionally, formation of pseudouridine at positions 38, 39 and 40 in the anticodon stem and loop of transfer RNAs. The polypeptide is tRNA pseudouridine synthase A (Methanosarcina mazei (strain ATCC BAA-159 / DSM 3647 / Goe1 / Go1 / JCM 11833 / OCM 88) (Methanosarcina frisia)).